The chain runs to 828 residues: DNA gyrase subunit A (828 aa).

The Topo IIA-type catalytic domain occupies 32 to 497 (LPDVRDGLKP…EVLSLEDEDL (466 aa)). Residue Y120 is the O-(5'-phospho-DNA)-tyrosine intermediate of the active site. The GyrA-box motif lies at 524–530 (QKRGGRG).

It belongs to the type II topoisomerase GyrA/ParC subunit family. As to quaternary structure, heterotetramer, composed of two GyrA and two GyrB chains. In the heterotetramer, GyrA contains the active site tyrosine that forms a transient covalent intermediate with DNA, while GyrB binds cofactors and catalyzes ATP hydrolysis.

It is found in the cytoplasm. The catalysed reaction is ATP-dependent breakage, passage and rejoining of double-stranded DNA.. In terms of biological role, a type II topoisomerase that negatively supercoils closed circular double-stranded (ds) DNA in an ATP-dependent manner to modulate DNA topology and maintain chromosomes in an underwound state. Negative supercoiling favors strand separation, and DNA replication, transcription, recombination and repair, all of which involve strand separation. Also able to catalyze the interconversion of other topological isomers of dsDNA rings, including catenanes and knotted rings. Type II topoisomerases break and join 2 DNA strands simultaneously in an ATP-dependent manner. This is DNA gyrase subunit A from Streptococcus pyogenes serotype M6 (strain ATCC BAA-946 / MGAS10394).